A 465-amino-acid chain; its full sequence is 6-phospho-beta-glucosidase (465 aa).

Glu-173 acts as the Proton donor in catalysis. Glu-362 acts as the Nucleophile in catalysis.

It belongs to the glycosyl hydrolase 1 family.

It carries out the reaction 6-phospho-beta-D-glucosyl-(1-&gt;4)-D-glucose + H2O = D-glucose 6-phosphate + D-glucose. Its pathway is carbohydrate metabolism; beta-glucoside metabolism. In Dickeya chrysanthemi (Pectobacterium chrysanthemi), this protein is 6-phospho-beta-glucosidase (arbB).